The following is a 78-amino-acid chain: UPF0291 protein ABC2165 (78 aa).

The segment at 56–78 is disordered; the sequence is AKGNDVTPQKLKDSKAQKHKRLH.

This sequence belongs to the UPF0291 family.

Its subcellular location is the cytoplasm. In Shouchella clausii (strain KSM-K16) (Alkalihalobacillus clausii), this protein is UPF0291 protein ABC2165.